A 373-amino-acid polypeptide reads, in one-letter code: ATP phosphoribosyltransferase regulatory subunit (373 aa).

The protein belongs to the class-II aminoacyl-tRNA synthetase family. HisZ subfamily. As to quaternary structure, heteromultimer composed of HisG and HisZ subunits.

It localises to the cytoplasm. The protein operates within amino-acid biosynthesis; L-histidine biosynthesis; L-histidine from 5-phospho-alpha-D-ribose 1-diphosphate: step 1/9. Required for the first step of histidine biosynthesis. May allow the feedback regulation of ATP phosphoribosyltransferase activity by histidine. In Chelativorans sp. (strain BNC1), this protein is ATP phosphoribosyltransferase regulatory subunit.